The chain runs to 159 residues: Probable histone H2A.5 (159 aa).

Positions 1-10 are enriched in gly residues; that stretch reads MDAAGAGAGG. 2 disordered regions span residues 1-29 and 136-159; these read MDAA…KKAV and EKAA…PKKA. Composition is skewed to basic residues over residues 11–29 and 148–159; these read KLKK…KKAV and PKKAAGKSPKKA. 2 short sequence motifs (SPKK motif) span residues 147–150 and 155–158; these read SPKK.

The protein belongs to the histone H2A family. As to quaternary structure, the nucleosome is a histone octamer containing two molecules each of H2A, H2B, H3 and H4 assembled in one H3-H4 heterotetramer and two H2A-H2B heterodimers. The octamer wraps approximately 147 bp of DNA.

The protein resides in the nucleus. Its subcellular location is the chromosome. Functionally, core component of nucleosome. Nucleosomes wrap and compact DNA into chromatin, limiting DNA accessibility to the cellular machineries which require DNA as a template. Histones thereby play a central role in transcription regulation, DNA repair, DNA replication and chromosomal stability. DNA accessibility is regulated via a complex set of post-translational modifications of histones, also called histone code, and nucleosome remodeling. In Oryza sativa subsp. indica (Rice), this protein is Probable histone H2A.5.